Reading from the N-terminus, the 125-residue chain is Small ribosomal subunit protein bS6m (125 aa).

The protein belongs to the bacterial ribosomal protein bS6 family. As to quaternary structure, component of the mitochondrial small ribosomal subunit (mt-SSU). Mature mammalian 55S mitochondrial ribosomes consist of a small (28S) and a large (39S) subunit. The 28S small subunit contains a 12S ribosomal RNA (12S mt-rRNA) and 30 different proteins. The 39S large subunit contains a 16S rRNA (16S mt-rRNA), a copy of mitochondrial valine transfer RNA (mt-tRNA(Val)), which plays an integral structural role, and 52 different proteins.

The protein resides in the mitochondrion. The polypeptide is Small ribosomal subunit protein bS6m (MRPS6) (Homo sapiens (Human)).